Reading from the N-terminus, the 109-residue chain is Preprofallaxidin-8 (109 aa).

The N-terminal stretch at 1–22 (MASLKKSLFLVLFLGLLSLSIC) is a signal peptide. The propeptide occupies 23–46 (EEQKRENEEDAEDENHEEESEEKR). Residues 27–46 (RENEEDAEDENHEEESEEKR) form a disordered region. Residues 30–42 (EEDAEDENHEEES) show a composition bias toward acidic residues. Residue Leu-62 is modified to Leucine amide. The propeptide occupies 66-70 (SEEKR). Met-75 bears the Methionine amide mark. A propeptide spanning residues 79 to 83 (SEEKR) is cleaved from the precursor. Met-88 is modified (methionine amide). 2 consecutive propeptides follow at residues 92-96 (SEEKR) and Ala-108.

The protein belongs to the frog skin active peptide (FSAP) family. Brevinin subfamily. In terms of tissue distribution, expressed by the skin glands.

It localises to the secreted. In terms of biological role, fallaxidin-2.1 shows no antibacterial activity against Gram-positive or Gram-negative bacteria. Does not inhibit the formation of NO by neuronal nitric oxide synthase. Has no effect on splenocyte proliferation or smooth muscle contraction. Its function is as follows. Fallaxidin-3.2 shows antibacterial activity against the Gram-positive bacteria E.faecalis (MIC=100 uM) and L.lactis (MIC=500 uM). No antibacterial activity against the Gram-positive bacteria B.cereus, L.innocua, M.luteus, S.epidermidis, S.uberis and S.aureus, or the Gram-negative bacteria E.cloacae and E.coli. This Litoria fallax (Eastern dwarf tree frog) protein is Preprofallaxidin-8.